The following is a 147-amino-acid chain: Protein Turandot Z (147 aa).

The signal sequence occupies residues 1–23 (MYFAIRLSFVLAVLICLTGNGSA).

It belongs to the Turandot family.

It is found in the secreted. A humoral factor that may play a role in stress tolerance. The polypeptide is Protein Turandot Z (Drosophila melanogaster (Fruit fly)).